Reading from the N-terminus, the 138-residue chain is ATP synthase epsilon chain, chloroplastic (138 aa).

The protein belongs to the ATPase epsilon chain family. As to quaternary structure, F-type ATPases have 2 components, CF(1) - the catalytic core - and CF(0) - the membrane proton channel. CF(1) has five subunits: alpha(3), beta(3), gamma(1), delta(1), epsilon(1). CF(0) has three main subunits: a, b and c.

The protein localises to the plastid. Its subcellular location is the chloroplast thylakoid membrane. Functionally, produces ATP from ADP in the presence of a proton gradient across the membrane. This Staurastrum punctulatum (Green alga) protein is ATP synthase epsilon chain, chloroplastic.